The following is a 368-amino-acid chain: High affinity transport system protein p37 (368 aa).

Positions 1–25 (MLFKKFTWVIPSLFLTIISTSLLIS) are cleaved as a signal peptide. Cys26 carries N-palmitoyl cysteine lipidation. A lipid anchor (S-diacylglycerol cysteine) is attached at Cys26.

The protein resides in the cell membrane. Its function is as follows. P37 is part of a high-affinity transport system. The chain is High affinity transport system protein p37 (p37) from Mycoplasma genitalium (strain ATCC 33530 / DSM 19775 / NCTC 10195 / G37) (Mycoplasmoides genitalium).